The chain runs to 178 residues: Large ribosomal subunit protein uL6 (178 aa).

This sequence belongs to the universal ribosomal protein uL6 family. As to quaternary structure, part of the 50S ribosomal subunit.

In terms of biological role, this protein binds to the 23S rRNA, and is important in its secondary structure. It is located near the subunit interface in the base of the L7/L12 stalk, and near the tRNA binding site of the peptidyltransferase center. The polypeptide is Large ribosomal subunit protein uL6 (Ligilactobacillus salivarius (strain UCC118) (Lactobacillus salivarius)).